A 71-amino-acid chain; its full sequence is UPF0352 protein Swoo_2786 (71 aa).

The protein belongs to the UPF0352 family.

This is UPF0352 protein Swoo_2786 from Shewanella woodyi (strain ATCC 51908 / MS32).